The sequence spans 341 residues: Aspartate carbamoyltransferase catalytic subunit (341 aa).

2 residues coordinate carbamoyl phosphate: R74 and T75. L-aspartate is bound at residue K102. R124, H152, and Q155 together coordinate carbamoyl phosphate. 2 residues coordinate L-aspartate: R190 and R244. Carbamoyl phosphate-binding residues include G285 and P286.

The protein belongs to the aspartate/ornithine carbamoyltransferase superfamily. ATCase family. As to quaternary structure, heterododecamer (2C3:3R2) of six catalytic PyrB chains organized as two trimers (C3), and six regulatory PyrI chains organized as three dimers (R2).

The catalysed reaction is carbamoyl phosphate + L-aspartate = N-carbamoyl-L-aspartate + phosphate + H(+). It participates in pyrimidine metabolism; UMP biosynthesis via de novo pathway; (S)-dihydroorotate from bicarbonate: step 2/3. Its function is as follows. Catalyzes the condensation of carbamoyl phosphate and aspartate to form carbamoyl aspartate and inorganic phosphate, the committed step in the de novo pyrimidine nucleotide biosynthesis pathway. The polypeptide is Aspartate carbamoyltransferase catalytic subunit (Novosphingobium aromaticivorans (strain ATCC 700278 / DSM 12444 / CCUG 56034 / CIP 105152 / NBRC 16084 / F199)).